Here is a 192-residue protein sequence, read N- to C-terminus: Leucine-rich repeat-containing protein 51 (192 aa).

3 LRR repeats span residues 49–71 (SLTQ…NQVA), 80–101 (NLAW…LTTF), and 103–124 (NLSV…NKLA). In terms of domain architecture, LRRCT spans 137 to 175 (NPMEEEKGYRQYVLCTLPHITTFDFSGVTKADRTTAEVW).

The protein localises to the cytoplasm. The protein is Leucine-rich repeat-containing protein 51 of Macaca mulatta (Rhesus macaque).